The sequence spans 226 residues: Histone H2B.v1 (226 aa).

A disordered region spans residues 100-130 (FNSAKQYPPQPPPAKTATPSSPSSIPAPPIS). The span at 114–123 (KTATPSSPSS) shows a compositional bias: low complexity.

The protein belongs to the histone H2B family.

The chain is Histone H2B.v1 (H2Bv1) from Dictyostelium discoideum (Social amoeba).